We begin with the raw amino-acid sequence, 266 residues long: Enterotoxin type C-3 (266 aa).

The first 27 residues, 1-27 (MYKRLFISRVILIFALILVISTPNVLA), serve as a signal peptide directing secretion. 2 residues coordinate Zn(2+): Asp-36 and Asp-110. Cysteines 120 and 137 form a disulfide. Zn(2+) contacts are provided by His-145 and His-149.

Belongs to the staphylococcal/streptococcal toxin family. As to quaternary structure, interacts with MHC class II molecules composed of alpha/HLA-DRA and beta/HLA-DRB1 chains. Interacts with host T-cell receptor/TCR beta variable chain TRBV8-2.

Its subcellular location is the secreted. Staphylococcal enterotoxin that activates the host immune system by binding as unprocessed molecules to major histocompatibility (MHC) complex class II and T-cell receptor (TCR) molecules. In turn, this ternary complex activates a large number of T-lymphocytes initiating a systemic release of pro-inflammatory cytokines. Also causes the intoxication staphylococcal food poisoning syndrome. This Staphylococcus aureus protein is Enterotoxin type C-3 (entC3).